A 234-amino-acid chain; its full sequence is Small ribosomal subunit protein uS2 (234 aa).

This sequence belongs to the universal ribosomal protein uS2 family.

The chain is Small ribosomal subunit protein uS2 from Prochlorococcus marinus (strain MIT 9515).